The following is a 494-amino-acid chain: AFQVNTNINALTTSAGATQLGLKNSLEKLSSGLRINKAADDASGMTISDSLRSQASALGQAISNANDGIGIIQVADKAMDEQLKILDTIKVKATQAAQDGQSLESRKAIQSDIIRLIQGLDNIGNTTSYNGQSLLSGQWTNKEFQIGTYSNQSIKVSVGSTTSDKIGQVRINTGAMITAASEATLTFKQINGGGTSPLEGVKISHSVGTGLGVLAEVINKNSDKTGIRAKASVETTSDKEIMSGNLKNLTINDVNIGNIVDIKKGDADGRLVQAINALTSSTGVEASTDSKGRLNLRSVDGRGIVLKADASEDNGDGKSAPMAIDAVNGGQSITDGEGAANYGRLSLVRLDARDIVLTSSDKPDENKFSAIGFGDNNVAMATVNLRDVLGKFDASVKSASGANYNAVIASGNSNLGAGVTTLVGAMLVMDIADSARKTLDKIRSDLGSVQGQMVSTVNNISVTQVNVKAAESRMREVDFAAESAEFNKYNILAQ.

The protein belongs to the bacterial flagellin family. Heteromer of FlaA and FlaB. FlaB is located proximal to the hook while the remainder of the filament is composed of the predominant FlaA.

It localises to the secreted. Its subcellular location is the bacterial flagellum. Its function is as follows. Flagellin is the subunit protein which polymerizes to form the filaments of bacterial flagella. Important for motility and virulence. The protein is Flagellin A (flaA) of Helicobacter mustelae.